The sequence spans 246 residues: Ribonuclease PH (246 aa).

Positions 67–87 are disordered; the sequence is NMLPGSTSPRKRRDRSGKVDG. Residues Arg88 and 126 to 128 contribute to the phosphate site; that span reads GTR.

This sequence belongs to the RNase PH family. In terms of assembly, homohexameric ring arranged as a trimer of dimers.

The catalysed reaction is tRNA(n+1) + phosphate = tRNA(n) + a ribonucleoside 5'-diphosphate. In terms of biological role, phosphorolytic 3'-5' exoribonuclease that plays an important role in tRNA 3'-end maturation. Removes nucleotide residues following the 3'-CCA terminus of tRNAs; can also add nucleotides to the ends of RNA molecules by using nucleoside diphosphates as substrates, but this may not be physiologically important. Probably plays a role in initiation of 16S rRNA degradation (leading to ribosome degradation) during starvation. The sequence is that of Ribonuclease PH from Rhodopirellula baltica (strain DSM 10527 / NCIMB 13988 / SH1).